The primary structure comprises 380 residues: Cytochrome b (380 aa).

4 helical membrane passes run 33 to 53 (FGSLLGLCLISQILTGLFLAM), 77 to 98 (WLIRNLHANGASFFFICIYFHI), 113 to 133 (WNIGVVLLLLVMMTAFVGYVL), and 178 to 198 (FFAFHFLFPFVILAMTILHLL). His-83 and His-97 together coordinate heme b. Residues His-182 and His-196 each contribute to the heme b site. His-201 contributes to the a ubiquinone binding site. Helical transmembrane passes span 226–246 (YKDLLGFAILLVALASLALFS), 288–308 (LGGVLALLASILVLMVVPFLH), 320–340 (VSQFLFWTLIADVAILTWIGG), and 347–367 (FIIIGQVASVLYFSLFLVFFP).

The protein belongs to the cytochrome b family. In terms of assembly, the cytochrome bc1 complex contains 3 respiratory subunits (MT-CYB, CYC1 and UQCRFS1), 2 core proteins (UQCRC1 and UQCRC2) and probably 6 low-molecular weight proteins. Heme b serves as cofactor.

It is found in the mitochondrion inner membrane. Component of the ubiquinol-cytochrome c reductase complex (complex III or cytochrome b-c1 complex) that is part of the mitochondrial respiratory chain. The b-c1 complex mediates electron transfer from ubiquinol to cytochrome c. Contributes to the generation of a proton gradient across the mitochondrial membrane that is then used for ATP synthesis. This chain is Cytochrome b (mt-cyb), found in Sarda sarda (Atlantic bonito).